Reading from the N-terminus, the 194-residue chain is NADH-quinone oxidoreductase subunit B (194 aa).

4 residues coordinate [4Fe-4S] cluster: cysteine 73, cysteine 74, cysteine 138, and cysteine 168.

The protein belongs to the complex I 20 kDa subunit family. In terms of assembly, NDH-1 is composed of 14 different subunits. Subunits NuoB, C, D, E, F, and G constitute the peripheral sector of the complex. The cofactor is [4Fe-4S] cluster.

The protein resides in the cell inner membrane. The enzyme catalyses a quinone + NADH + 5 H(+)(in) = a quinol + NAD(+) + 4 H(+)(out). Functionally, NDH-1 shuttles electrons from NADH, via FMN and iron-sulfur (Fe-S) centers, to quinones in the respiratory chain. The immediate electron acceptor for the enzyme in this species is believed to be ubiquinone. Couples the redox reaction to proton translocation (for every two electrons transferred, four hydrogen ions are translocated across the cytoplasmic membrane), and thus conserves the redox energy in a proton gradient. The sequence is that of NADH-quinone oxidoreductase subunit B from Rhizobium leguminosarum bv. trifolii (strain WSM2304).